A 117-amino-acid polypeptide reads, in one-letter code: Large ribosomal subunit protein bL19 (117 aa).

This sequence belongs to the bacterial ribosomal protein bL19 family.

Its function is as follows. This protein is located at the 30S-50S ribosomal subunit interface and may play a role in the structure and function of the aminoacyl-tRNA binding site. The sequence is that of Large ribosomal subunit protein bL19 from Exiguobacterium sp. (strain ATCC BAA-1283 / AT1b).